We begin with the raw amino-acid sequence, 157 residues long: NAD(P)H-quinone oxidoreductase subunit N (157 aa).

It belongs to the complex I NdhN subunit family. As to quaternary structure, NDH-1 can be composed of about 15 different subunits; different subcomplexes with different compositions have been identified which probably have different functions.

The protein localises to the cellular thylakoid membrane. It catalyses the reaction a plastoquinone + NADH + (n+1) H(+)(in) = a plastoquinol + NAD(+) + n H(+)(out). The enzyme catalyses a plastoquinone + NADPH + (n+1) H(+)(in) = a plastoquinol + NADP(+) + n H(+)(out). NDH-1 shuttles electrons from an unknown electron donor, via FMN and iron-sulfur (Fe-S) centers, to quinones in the respiratory and/or the photosynthetic chain. The immediate electron acceptor for the enzyme in this species is believed to be plastoquinone. Couples the redox reaction to proton translocation, and thus conserves the redox energy in a proton gradient. Cyanobacterial NDH-1 also plays a role in inorganic carbon-concentration. The protein is NAD(P)H-quinone oxidoreductase subunit N of Synechococcus sp. (strain CC9902).